The primary structure comprises 384 residues: tRNA-specific 2-thiouridylase MnmA (384 aa).

Residues 18 to 25 (AMSGGVDS) and Leu-44 contribute to the ATP site. The active-site Nucleophile is Cys-112. A disulfide bridge links Cys-112 with Cys-209. Gly-136 lines the ATP pocket. Positions 159–161 (RDQ) are interaction with tRNA. Cys-209 functions as the Cysteine persulfide intermediate in the catalytic mechanism.

It belongs to the MnmA/TRMU family.

It localises to the cytoplasm. The enzyme catalyses S-sulfanyl-L-cysteinyl-[protein] + uridine(34) in tRNA + AH2 + ATP = 2-thiouridine(34) in tRNA + L-cysteinyl-[protein] + A + AMP + diphosphate + H(+). Its function is as follows. Catalyzes the 2-thiolation of uridine at the wobble position (U34) of tRNA, leading to the formation of s(2)U34. In Methylobacterium radiotolerans (strain ATCC 27329 / DSM 1819 / JCM 2831 / NBRC 15690 / NCIMB 10815 / 0-1), this protein is tRNA-specific 2-thiouridylase MnmA.